A 434-amino-acid chain; its full sequence is Perilipin-3 (434 aa).

The interval 1-22 is disordered; sequence MSADGAEADGSTQVTVEEPVQQ. S2 carries the N-acetylserine modification. Phosphoserine is present on S31. K65 carries the N6-acetyllysine modification. S91 carries the post-translational modification Phosphoserine. K122 is covalently cross-linked (Glycyl lysine isopeptide (Lys-Gly) (interchain with G-Cter in SUMO1)). A phosphoserine mark is found at S130 and S148. T170 bears the Phosphothreonine mark. 2 positions are modified to phosphoserine: S175 and S179. T216 is subject to Phosphothreonine. Phosphoserine is present on residues S217 and S241. At Y251 the chain carries Phosphotyrosine. 2 coiled-coil regions span residues 252–280 and 353–377; these read EHSLGKLRATKQRAQEALLQLSQALSLME and TNVKDQVQQARRQVEDLQATFSSIH.

Belongs to the perilipin family. Homooligomer. Interacts with M6PR (via the cytoplasmic domain). Interacts with IGF2R (via the cytoplasmic domain). Post-translationally, phosphorylation at Tyr-251 by isoform 1 of CHKA (CHKalpha2) promotes dissociation from lipid droplets: dissociation is followed by recruitment of autophagosome machinery to lipid droplets and subsequent lipid droplet lipolysis.

It is found in the lipid droplet. The protein localises to the endosome membrane. It localises to the cytoplasm. In terms of biological role, structural component of lipid droplets, which is required for the formation and maintenance of lipid storage droplets. Required for the transport of mannose 6-phosphate receptors (MPR) from endosomes to the trans-Golgi network. The protein is Perilipin-3 (PLIN3) of Pongo abelii (Sumatran orangutan).